The following is a 194-amino-acid chain: 7-methyl-GTP pyrophosphatase (194 aa).

D70 (proton acceptor) is an active-site residue.

It belongs to the Maf family. YceF subfamily. It depends on a divalent metal cation as a cofactor.

It localises to the cytoplasm. It catalyses the reaction N(7)-methyl-GTP + H2O = N(7)-methyl-GMP + diphosphate + H(+). Its function is as follows. Nucleoside triphosphate pyrophosphatase that hydrolyzes 7-methyl-GTP (m(7)GTP). May have a dual role in cell division arrest and in preventing the incorporation of modified nucleotides into cellular nucleic acids. The chain is 7-methyl-GTP pyrophosphatase from Vibrio vulnificus (strain YJ016).